The sequence spans 896 residues: Translation initiation factor IF-2 (896 aa).

Basic and acidic residues-rich tracts occupy residues 94–159 (KRDP…KDKV) and 166–219 (DMTK…EKNW). The interval 94 to 307 (KRDPQEAERL…GSALQQGFQK (214 aa)) is disordered. Positions 256 to 271 (GRGRNAKAARPAKKGN) are enriched in basic residues. Basic and acidic residues predominate over residues 272–285 (KHAESKADREEARA). The region spanning 395–564 (PRAPVVTIMG…LLQAEVLELK (170 aa)) is the tr-type G domain. The tract at residues 404-411 (GHVDHGKT) is G1. 404–411 (GHVDHGKT) is a GTP binding site. A G2 region spans residues 429–433 (GITQH). Positions 450-453 (DTPG) are G3. GTP contacts are provided by residues 450-454 (DTPGH) and 504-507 (NKID). The G4 stretch occupies residues 504-507 (NKID). The G5 stretch occupies residues 540–542 (SAK).

Belongs to the TRAFAC class translation factor GTPase superfamily. Classic translation factor GTPase family. IF-2 subfamily.

The protein resides in the cytoplasm. Its function is as follows. One of the essential components for the initiation of protein synthesis. Protects formylmethionyl-tRNA from spontaneous hydrolysis and promotes its binding to the 30S ribosomal subunits. Also involved in the hydrolysis of GTP during the formation of the 70S ribosomal complex. The protein is Translation initiation factor IF-2 (infB) of Klebsiella oxytoca.